The primary structure comprises 302 residues: Ubiquinone biosynthesis protein COQ4, mitochondrial (302 aa).

The transit peptide at 1-19 (MNSSPARAVRALVQSQSRQ) directs the protein to the mitochondrion. Zn(2+) contacts are provided by H176, D177, H180, and E192. Over residues 268–282 (PPPDMRDARKRERDA) the composition is skewed to basic and acidic residues. The segment at 268 to 302 (PPPDMRDARKRERDARRRRKQLETEAQQGLDAASL) is disordered.

The protein belongs to the COQ4 family. Component of a multi-subunit COQ enzyme complex, composed of at least COQ3, COQ4, COQ5, COQ6, COQ7 and COQ9. It depends on Zn(2+) as a cofactor.

The protein resides in the mitochondrion inner membrane. It carries out the reaction a 4-hydroxy-3-methoxy-5-(all-trans-polyprenyl)benzoate + H(+) = a 2-methoxy-6-(all-trans-polyprenyl)phenol + CO2. The protein operates within cofactor biosynthesis; ubiquinone biosynthesis. Lyase that catalyzes the C1-decarboxylation of 4-hydroxy-3-methoxy-5-(all-trans-polyprenyl)benzoic acid into 2-methoxy-6-(all-trans-polyprenyl)phenol during ubiquinone biosynthesis. In Pyricularia oryzae (strain 70-15 / ATCC MYA-4617 / FGSC 8958) (Rice blast fungus), this protein is Ubiquinone biosynthesis protein COQ4, mitochondrial.